A 195-amino-acid polypeptide reads, in one-letter code: Biogenesis of lysosome-related organelles complex 1 subunit 3 (195 aa).

The segment covering 1–11 (MESSQGRRRRP) has biased composition (basic residues). The tract at residues 1-72 (MESSQGRRRR…PEPEPTVVPV (72 aa)) is disordered. Residues 25–51 (ELSASSSEEELYLGPSGPTRGRPTGLR) show a composition bias toward low complexity. A Phosphothreonine modification is found at threonine 59. Serine 61 bears the Phosphoserine mark.

This sequence belongs to the BLOC1S3 family. In terms of assembly, octamer composed of one copy each BLOC1S1, BLOC1S2, BLOC1S3, BLOC1S4, BLOC1S5, BLOC1S6, DTNBP1/BLOC1S7 and SNAPIN/BLOC1S8. Interacts directly with BLOC1S2. Component of the biogenesis of lysosome-related organelles complex 1 (BLOC-1) composed of BLOC1S1, BLOC1S2, BLOC1S3, BLOC1S4, BLOC1S5, BLOC1S6, DTNBP1/BLOC1S7 and SNAPIN/BLOC1S8. The BLOC-1 complex associates with the AP-3 protein complex and membrane protein cargos. Interacts with BLOC1S4, BLOC1S5 and BLOC1S6. Phosphorylated. Ubiquitously expressed.

It is found in the cytoplasm. Component of the BLOC-1 complex, a complex that is required for normal biogenesis of lysosome-related organelles (LRO), such as platelet dense granules and melanosomes. In concert with the AP-3 complex, the BLOC-1 complex is required to target membrane protein cargos into vesicles assembled at cell bodies for delivery into neurites and nerve terminals. The BLOC-1 complex, in association with SNARE proteins, is also proposed to be involved in neurite extension. Plays a role in intracellular vesicle trafficking. The protein is Biogenesis of lysosome-related organelles complex 1 subunit 3 (Bloc1s3) of Mus musculus (Mouse).